Here is a 133-residue protein sequence, read N- to C-terminus: Mitochondrial import inner membrane translocase subunit TIM17-3 (133 aa).

4 helical membrane-spanning segments follow: residues 15–35, 63–83, 90–105, and 115–128; these read IVNA…VYHF, GGTF…LVRI, WNSI…VLSI, and SAVM…VLNP.

Belongs to the Tim17/Tim22/Tim23 family. Component of the TIM17:23 complex at least composed of TIM23, TIM17 and TIM50. The complex interacts with the TIM44 component of the PAM complex. Expressed in cotyledons, roots, flowers and leaves.

It is found in the mitochondrion inner membrane. Essential component of the TIM17:23 complex, a complex that mediates the translocation of transit peptide-containing proteins across the mitochondrial inner membrane. Links the inner and outer membranes. The polypeptide is Mitochondrial import inner membrane translocase subunit TIM17-3 (TIM17-3) (Arabidopsis thaliana (Mouse-ear cress)).